The following is a 660-amino-acid chain: Protein FAM161A (660 aa).

Coiled coils occupy residues 93–120 and 296–320; these read EEYF…YQDK and YHDL…ALLA. Residues 341–525 are required for interaction with CFAP418; that stretch reads QLRDFLKYKK…PTVSSRGREQ (185 aa). Residues Lys-468 and Lys-484 each participate in a glycyl lysine isopeptide (Lys-Gly) (interchain with G-Cter in SUMO2) cross-link. Residues 522 to 552 adopt a coiled-coil conformation; the sequence is GREQAVRKSEKERMREYQRELEEREEKLKKR. The interval 605–660 is disordered; that stretch reads KSVTEDKESFNEEEKIEERENGEENYFIDTNSQDSYKEKDEANEESEEEKSVEESH. Residues 606–623 show a composition bias toward basic and acidic residues; the sequence is SVTEDKESFNEEEKIEER. Residues 645-660 show a composition bias toward acidic residues; the sequence is EANEESEEEKSVEESH.

Belongs to the FAM161 family. As to quaternary structure, interacts (via central region) with CFAP418 (via N-terminus); the interaction is direct. Interacts (via C-terminus) with microtubules. Interacts with LCA5. Interacts with CEP290. Interacts with SDCCAG8. Interacts with FAM161B. Interacts with POC1B. Interacts with CEP78. Forms a microtubule-associated complex with POC5, CETN2 and POC1B. Interacts with CCDC15. As to expression, isoform 1 and isoform 3 are widely expressed with highest levels in retina and testis, with isoform 1 being the most abundant in all tissues tested.

It localises to the cytoplasm. Its subcellular location is the cytoskeleton. The protein localises to the cilium basal body. It is found in the cell projection. The protein resides in the cilium. It localises to the microtubule organizing center. Its subcellular location is the centrosome. The protein localises to the centriole. In terms of biological role, involved in ciliogenesis. The protein is Protein FAM161A (FAM161A) of Homo sapiens (Human).